The chain runs to 321 residues: Glucokinase (321 aa).

Residue 8 to 13 (GDVGGT) participates in ATP binding.

It belongs to the bacterial glucokinase family.

It is found in the cytoplasm. The catalysed reaction is D-glucose + ATP = D-glucose 6-phosphate + ADP + H(+). The sequence is that of Glucokinase from Escherichia coli (strain SMS-3-5 / SECEC).